Consider the following 188-residue polypeptide: FMN-dependent NADPH-azoreductase (188 aa).

The protein belongs to the azoreductase type 2 family. As to quaternary structure, homotetramer. The cofactor is FMN.

Functionally, catalyzes the reductive cleavage of azo bond in aromatic azo compounds to the corresponding amines. Requires NADPH, but not NADH, as an electron donor for its activity. The polypeptide is FMN-dependent NADPH-azoreductase (azo1) (Staphylococcus aureus (strain MSSA476)).